The following is a 151-amino-acid chain: Proline-rich acidic protein 1 (151 aa).

A signal peptide spans 1–20 (MRRLLLVTSLVVVLLWEAGA). The tract at residues 71-151 (LTTEEKPRGQ…EDQDHIYHPQ (81 aa)) is disordered.

In terms of assembly, interacts with isoform 1 and isoform 3 of MAD1L1. Interacts with MTTP. In terms of tissue distribution, highly expressed in the intestinal epithelial cells (at protein level). Abundantly expressed in the epithelial cells of the liver, kidney and cervix. Significantly down-regulated in hepatocellular carcinoma and right colon adenocarcinoma compared with the respective adjacent normal tissues. Expressed in epididymis (at protein level).

The protein localises to the secreted. It localises to the endoplasmic reticulum. Lipid-binding protein which promotes lipid absorption by facilitating MTTP-mediated lipid transfer (mainly triglycerides and phospholipids) and MTTP-mediated apoB lipoprotein assembly and secretion. Protects the gastrointestinal epithelium from irradiation-induced apoptosis. May play an important role in maintaining normal growth homeostasis in epithelial cells. Involved in p53/TP53-dependent cell survival after DNA damage. May down-regulate the expression of MAD1L1 and exert a suppressive role in mitotic spindle assembly checkpoint in hepatocellular carcinomas. This chain is Proline-rich acidic protein 1 (PRAP1), found in Homo sapiens (Human).